Here is a 322-residue protein sequence, read N- to C-terminus: Putative small RNA degrading nuclease 4 (322 aa).

One can recognise an Exonuclease domain in the interval 75-213; sequence MLALDCEMVL…HDAAAAMKLA (139 aa).

Belongs to the REXO1/REXO3 family.

Its subcellular location is the nucleus. In terms of biological role, putative 3'-5' exonuclease degrading single-stranded small RNAs. In Arabidopsis thaliana (Mouse-ear cress), this protein is Putative small RNA degrading nuclease 4 (SDN4).